Here is a 772-residue protein sequence, read N- to C-terminus: 1,4-alpha-glucan branching enzyme GlgB (772 aa).

The Nucleophile role is filled by D431. The Proton donor role is filled by E484.

Belongs to the glycosyl hydrolase 13 family. GlgB subfamily. In terms of assembly, monomer.

It carries out the reaction Transfers a segment of a (1-&gt;4)-alpha-D-glucan chain to a primary hydroxy group in a similar glucan chain.. It participates in glycan biosynthesis; glycogen biosynthesis. In terms of biological role, catalyzes the formation of the alpha-1,6-glucosidic linkages in glycogen by scission of a 1,4-alpha-linked oligosaccharide from growing alpha-1,4-glucan chains and the subsequent attachment of the oligosaccharide to the alpha-1,6 position. This chain is 1,4-alpha-glucan branching enzyme GlgB, found in Synechococcus sp. (strain RCC307).